The chain runs to 328 residues: Cytochrome c biogenesis protein CcsA (328 aa).

8 helical membrane-spanning segments follow: residues 12–32, 45–65, 72–92, 100–120, 145–165, 234–254, 263–283, and 296–316; these read HISFSVVSLLISIHLITLLLG, GMIITFFCITGLLVTRWIFSG, LYESLIFLSWTFSIFYMVLCL, FNTIITPSILFTQGFATSGLL, MILGYTTLLCGSLLSVAILVI, TISLGFIFLTVGNISGAVWAN, WDPKETWAFITWIIFAIYLHI, and IVASMGFLIIWICYLGINLLG.

Belongs to the CcmF/CycK/Ccl1/NrfE/CcsA family. In terms of assembly, may interact with Ccs1.

The protein resides in the plastid. It is found in the chloroplast thylakoid membrane. Its function is as follows. Required during biogenesis of c-type cytochromes (cytochrome c6 and cytochrome f) at the step of heme attachment. The protein is Cytochrome c biogenesis protein CcsA of Phaseolus vulgaris (Kidney bean).